A 1191-amino-acid chain; its full sequence is Probable inositol polyphosphate 5-phosphatase C9G1.10c (1191 aa).

Polar residues-rich tracts occupy residues 1–10 (MASRQGFSNV), 72–101 (QVSSTIGSSTGRKVSGSIQRLASNFKNPSN), 114–135 (SDSSESHVATPSSPTISNSFVS), 151–161 (SFQSSVQSTKG), and 181–193 (NFSSKAGSSSPIS). Positions 1 to 193 (MASRQGFSNV…SKAGSSSPIS (193 aa)) are disordered. Residue serine 195 is modified to Phosphoserine. Disordered stretches follow at residues 205-281 (SQSP…PQPV), 294-334 (SQQL…DASL), and 355-425 (IPEK…SSSS). The segment covering 268–280 (TPPPIPSPRPPQP) has biased composition (pro residues). A compositionally biased stretch (basic residues) spans 302 to 311 (SPRKPPKPPL). 3 stretches are compositionally biased toward polar residues: residues 316-334 (TQRSSSPIENLATKSDASL), 367-382 (HTLSELSSPALTSENL), and 400-413 (LATNKPVSMPVSTE). The span at 414-425 (QSDPSVAASSSS) shows a compositional bias: low complexity.

The protein belongs to the inositol 1,4,5-trisphosphate 5-phosphatase family.

It localises to the cytoplasm. The protein is Probable inositol polyphosphate 5-phosphatase C9G1.10c of Schizosaccharomyces pombe (strain 972 / ATCC 24843) (Fission yeast).